The sequence spans 157 residues: Subgroup A Rous sarcoma virus receptor pg950 (157 aa).

The first 19 residues, 1–19, serve as a signal peptide directing secretion; that stretch reads MARLLPALLLLLLPGNVTG. N-linked (GlcNAc...) asparagine glycosylation is found at Asn20 and Asn24. At 20–102 the chain is on the extracellular side; it reads NGSGNGSLSR…RALPARNHGR (83 aa). The region spanning 28–71 is the LDL-receptor class A domain; the sequence is SRCPPGQFRCSEPPGAHGECYPQDWLCDGHPDCDDGRDEWGCGT. Intrachain disulfides connect Cys30/Cys47, Cys37/Cys60, and Cys54/Cys69. Asn81 is a glycosylation site (N-linked (GlcNAc...) asparagine). The chain crosses the membrane as a helical span at residues 103-125; sequence MWMLITAVLLCCLVAVGGIAAWG. At 126–157 the chain is on the cytoplasmic side; it reads KSKAKSRSDIFSLASASKELLVPDKSQADLFS.

In terms of assembly, (Microbial infection) Interacts with Rous sarcoma virus envelope protein; this interaction allows the viral attachment.

It localises to the membrane. Its function is as follows. Responsible for susceptibility to the retrovirus subgroup A Rous sarcoma virus. This is Subgroup A Rous sarcoma virus receptor pg950 from Coturnix japonica (Japanese quail).